A 551-amino-acid polypeptide reads, in one-letter code: Putative transport protein HI_0035 (551 aa).

A run of 5 helical transmembrane segments spans residues 4–24 (IAITISLLALVAVIGLWIGHW), 28–48 (GVGLGIGGVLFGGIIVAHFTN), 65–85 (FGLILFVYTIGIQVGPGFFSS), 95–115 (AFAILIILLGSIAVVLVHKIA), and 157–177 (VSYAMAYPFGICGILLAMWLI). RCK C-terminal domains follow at residues 191–275 (RFNA…IIGH) and 277–360 (VDAP…VIGN). The next 6 membrane-spanning stretches (helical) occupy residues 370–390 (MLPVFIGIGLGVLVGSIPFYI), 402–424 (AGGPLVVALILARIGTIGKLYWF), 438–458 (IVLFLAVVGLKSGGSFFDTLV), 463–483 (LEWMGYGIFITFVPLIIVGTI), 492–512 (YLTICGLLAGSMTDPPALAFA), and 529–549 (VYPLVMFLRIMSPQLLAVLLW).

Belongs to the AAE transporter (TC 2.A.81) family. YidE subfamily.

It localises to the cell membrane. This chain is Putative transport protein HI_0035, found in Haemophilus influenzae (strain ATCC 51907 / DSM 11121 / KW20 / Rd).